The following is a 688-amino-acid chain: Pescadillo homolog (688 aa).

One can recognise a BRCT domain in the interval 351–470; the sequence is EVASLFASFT…KLLRHDLYAP (120 aa). Disordered stretches follow at residues 411 to 442 and 496 to 688; these read RPPLPESALPPLPQNPGEGAEKAPRVRPGTRM and AEQE…TKGR. Residues 412–424 show a composition bias toward pro residues; sequence PPLPESALPPLPQ. Residues 496-536 are a coiled coil; that stretch reads AEQESDGEAERQAEEENEEEESEVEGLSMDKEMVETENSEA. 4 stretches are compositionally biased toward acidic residues: residues 510–519, 530–544, 554–565, and 576–589; these read EENEEEESEV, ETENSEAGESDEESV, GSDDEEEESEED, and EAADVQSESEDDEE. The segment covering 619–634 has biased composition (basic residues); it reads KKSKKQKPLAKKHAAQ. Residues 627–686 are a coiled coil; that stretch reads LAKKHAAQKKKEQEELERQKMMMSRKKRKLLDKMLYSNKKKDEEAEKLRRKRRKIEQGTK. Residues 635-646 are compositionally biased toward basic and acidic residues; it reads KKKEQEELERQK.

It belongs to the pescadillo family. As to quaternary structure, component of the NOP7 complex, composed of ERB1, NOP7 and YTM1. The complex is held together by ERB1, which interacts with NOP7 via its N-terminal domain and with YTM1 via a high-affinity interaction between the seven-bladed beta-propeller domains of the 2 proteins. The NOP7 complex associates with the 66S pre-ribosome.

Its subcellular location is the nucleus. It is found in the nucleolus. The protein localises to the nucleoplasm. Functionally, component of the NOP7 complex, which is required for maturation of the 25S and 5.8S ribosomal RNAs and formation of the 60S ribosome. This chain is Pescadillo homolog, found in Coccidioides immitis (strain RS) (Valley fever fungus).